Consider the following 534-residue polypeptide: MKLLAVRRLLRIQRVVIRYRLDDLLFDLPLPWFLLALRYVLPWRWFPRKPLELSRGARLRLALQDLGPIFIKFGQILSTRRDLLPEDIADELMRLQDRVPPFDSQLSVKLIEEQLGKKISEVFSRFDVEPLASASVAQVHAAQLKTGEEVVVKVIRPGLKPIIAQDLAWLFILARAAEKVSADARLLHPVDVVSDYEKTIYDELDLLREAANASQLKRNFEGSPLLYVPQVYWDWCRPKVLVMERIYGIQVTDLATLADQRTDMKMLAERGVEIFFTQVFRDSFFHADMHPGNIFVSTVNPWSPQYIAIDCGIVGSLTPEDQDYLARNLFAFFKRDYRRVAQLHIDSGWVPAETKLNEFEAAIRTVCEPIFEKPLKDISFGQVLMRLFQTARRFNMEVQPQLVLLQKTLLNIEGLGRQLYPDLDLWNTAQPFLERWMRERVSPKALLGNVQSQFEQLPHLANMARDLLERMSQPHANDPPPPWKKRKDDWFLRLLGSAHLAGGTILAAGGPLHELGHWPAGIMVAVGLYLVVRR.

The helical transmembrane segment at 23–43 threads the bilayer; the sequence is DLLFDLPLPWFLLALRYVLPW. Positions 125-492 constitute a Protein kinase domain; the sequence is RFDVEPLASA…WKKRKDDWFL (368 aa). ATP contacts are provided by residues 131–139 and K153; that span reads LASASVAQV. D288 acts as the Proton acceptor in catalysis. Transmembrane regions (helical) follow at residues 490-510 and 512-532; these read WFLRLLGSAHLAGGTILAAGG and LHELGHWPAGIMVAVGLYLVV.

It belongs to the ABC1 family. UbiB subfamily.

Its subcellular location is the cell inner membrane. It functions in the pathway cofactor biosynthesis; ubiquinone biosynthesis [regulation]. Its function is as follows. Is probably a protein kinase regulator of UbiI activity which is involved in aerobic coenzyme Q (ubiquinone) biosynthesis. This is Probable protein kinase UbiB from Pseudomonas fluorescens (strain Pf0-1).